Reading from the N-terminus, the 469-residue chain is Melanopsin (469 aa).

Over 1–71 (MDSPPGPTAP…VDVPDHAHYI (71 aa)) the chain is Extracellular. Asparagine 30 carries N-linked (GlcNAc...) asparagine glycosylation. A helical transmembrane segment spans residues 72 to 92 (LGTVILLVGLTGMLGNLTVIY). Residues 93-106 (TFCRSRSLRTPANM) are Cytoplasmic-facing. Residues 107–127 (LIINLAVSDFLMSFTQAPVFF) traverse the membrane as a helical segment. Over 128 to 143 (ASSLYKKWLFGETGCE) the chain is Extracellular. An intrachain disulfide couples cysteine 142 to cysteine 220. Residues 144–164 (FYAFCGAVLGITSMITLTAIA) traverse the membrane as a helical segment. Topologically, residues 165-187 (LDRYLVITRPLATIGMGSKRRTA) are cytoplasmic. Residues 188–208 (LVLLGIWLYALAWSLPPFFGW) form a helical membrane-spanning segment. At 209–237 (SAYVPEGLLTSCSWDYVTFTPQVRAYTML) the chain is on the extracellular side. The chain crosses the membrane as a helical span at residues 238-258 (LFCFVFFLPLLVIIFCYISIF). Residues 259–295 (RAIRETGRACEGWSESPQRRRQWHRLQSEWKMAKVAL) are Cytoplasmic-facing. Residues 296–316 (IVILLFVLSWAPYSTVALVAF) form a helical membrane-spanning segment. Residues 317 to 328 (AGYSHILTPYMS) lie on the Extracellular side of the membrane. A helical transmembrane segment spans residues 329 to 349 (SVPAVIAKASAIHNPIVYAIT). Lysine 336 is subject to N6-(retinylidene)lysine. Topologically, residues 350–469 (HPKYRAAIAQ…SLDLGMQDAP (120 aa)) are cytoplasmic. The disordered stretch occupies residues 409 to 469 (GSESEVGWTD…SLDLGMQDAP (61 aa)).

The protein belongs to the G-protein coupled receptor 1 family. Opsin subfamily.

The protein localises to the cell membrane. Its subcellular location is the cell projection. It localises to the axon. It is found in the dendrite. The protein resides in the perikaryon. Its function is as follows. Photoreceptor that binds cis-retinaldehydes. Contributes to pupillar reflex, photoentrainment and other non-image forming responses to light. May be involved in the optokinetic visual tracking response. May be involved in the regulation of retinal hyaloid vessel growth and regression. This Phodopus sungorus (Striped hairy-footed hamster) protein is Melanopsin (OPN4).